Consider the following 487-residue polypeptide: Serine/threonine-protein kinase 4 (487 aa).

Met1 carries the post-translational modification N-acetylmethionine. Thr3 is subject to Phosphothreonine. Residues 30–281 (FDVLEKLGEG…ATQLLQHPFV (252 aa)) form the Protein kinase domain. Residues 36-44 (LGEGSYGSV) and Lys59 each bind ATP. The Proton acceptor role is filled by Asp149. Position 183 is a phosphothreonine; by autocatalysis (Thr183). Phosphoserine is present on Ser265. The stretch at 290 to 310 (LRDLINEAMDVKLKRQEAQQR) forms a coiled coil. Positions 305–337 (QEAQQREVDQDDEENSEEDELDSGTMVRAVGDE) are disordered. The segment covering 313–326 (DQDDEENSEEDELD) has biased composition (acidic residues). Phosphoserine is present on Ser320. Phosphothreonine occurs at positions 340 and 367. Position 387 is a phosphothreonine; by PKB/AKT1 (Thr387). 2 positions are modified to phosphoserine: Ser410 and Ser414. The residue at position 433 (Tyr433) is a Phosphotyrosine. In terms of domain architecture, SARAH spans 433–480 (YEFLKSWTVEDLQKRLLALDPMMEQEIEEIRQKYQSKRQPILDAIEAK).

Belongs to the protein kinase superfamily. STE Ser/Thr protein kinase family. STE20 subfamily. As to quaternary structure, homodimer; mediated via the coiled-coil region. Interacts with NORE1, which inhibits autoactivation. Interacts with and stabilizes SAV1. Interacts with RASSF1. Interacts with FOXO3. Interacts with RASSF2 (via SARAH domain). Interacts with AR, PKB/AKT1, TNNI3 and SIRT1. Interacts with DLG5 (via PDZ domain 3). Interacts with MARK3 and SCRIB in the presence of DLG5. Requires Mg(2+) as cofactor. Autophosphorylated on serine and threonine residues. Phosphorylation at Thr-387 by PKB/AKT1, leads to inhibition of its: kinase activity, nuclear translocation and autophosphorylation at Thr-183. It also diminishes its cleavage by caspases and its ability to phosphorylate FOXO3. Post-translationally, proteolytically cleaved by caspase-3 during apoptosis at Asp-326 and Asp-349 resulting in a 37 kDa or a 39 kDa subunit respectively. The 39 kDa subunit is further cleaved into the 37 kDa form. Proteolytic cleavage results in kinase activation and nuclear translocation of the truncated form (MST1/N). It is less likely that cleavage at Asp-349 is a prerequisite for activation as this site is not conserved in the murine ortholog.

Its subcellular location is the cytoplasm. It is found in the nucleus. It catalyses the reaction L-seryl-[protein] + ATP = O-phospho-L-seryl-[protein] + ADP + H(+). The enzyme catalyses L-threonyl-[protein] + ATP = O-phospho-L-threonyl-[protein] + ADP + H(+). Inhibited by the C-terminal non-catalytic region. Activated by caspase-cleavage. Full activation also requires homodimerization and autophosphorylation of Thr-183. Activated by RASSF1 which acts by preventing its dephosphorylation. Functionally, stress-activated, pro-apoptotic kinase which, following caspase-cleavage, enters the nucleus and induces chromatin condensation followed by internucleosomal DNA fragmentation. Key component of the Hippo signaling pathway which plays a pivotal role in organ size control and tumor suppression by restricting proliferation and promoting apoptosis. The core of this pathway is composed of a kinase cascade wherein STK3/MST2 and STK4/MST1, in complex with its regulatory protein SAV1, phosphorylates and activates LATS1/2 in complex with its regulatory protein MOB1, which in turn phosphorylates and inactivates YAP1 oncoprotein and WWTR1/TAZ. Phosphorylation of YAP1 by LATS2 inhibits its translocation into the nucleus to regulate cellular genes important for cell proliferation, cell death, and cell migration. STK3/MST2 and STK4/MST1 are required to repress proliferation of mature hepatocytes, to prevent activation of facultative adult liver stem cells (oval cells), and to inhibit tumor formation. Phosphorylates 'Ser-14' of histone H2B (H2BS14ph) during apoptosis. Phosphorylates FOXO3 upon oxidative stress, which results in its nuclear translocation and cell death initiation. Phosphorylates MOBKL1A, MOBKL1B and RASSF2. Phosphorylates TNNI3 (cardiac Tn-I) and alters its binding affinity to TNNC1 (cardiac Tn-C) and TNNT2 (cardiac Tn-T). Phosphorylates FOXO1 on 'Ser-212' and regulates its activation and stimulates transcription of PMAIP1 in a FOXO1-dependent manner. Phosphorylates SIRT1 and inhibits SIRT1-mediated p53/TP53 deacetylation, thereby promoting p53/TP53 dependent transcription and apoptosis upon DNA damage. Acts as an inhibitor of PKB/AKT1. Phosphorylates AR on 'Ser-650' and suppresses its activity by intersecting with PKB/AKT1 signaling and antagonizing formation of AR-chromatin complexes. This chain is Serine/threonine-protein kinase 4 (STK4), found in Otolemur garnettii (Small-eared galago).